The sequence spans 125 residues: Cu-Zn superoxide dismutase-like protein OPG175 (125 aa).

The cysteines at positions 52 and 102 are disulfide-linked.

The protein belongs to the Cu-Zn superoxide dismutase family.

The protein localises to the virion. Its subcellular location is the host cytoplasm. Superoxide dismutase-like protein with no enzymatic activity. The chain is Cu-Zn superoxide dismutase-like protein OPG175 (OPG175) from Cowpox virus (strain Brighton Red) (CPV).